The following is a 124-amino-acid chain: Small ribosomal subunit protein uS12 (124 aa).

Residue Asp89 is modified to 3-methylthioaspartic acid.

The protein belongs to the universal ribosomal protein uS12 family. Part of the 30S ribosomal subunit. Contacts proteins S8 and S17. May interact with IF1 in the 30S initiation complex.

Its function is as follows. With S4 and S5 plays an important role in translational accuracy. Functionally, interacts with and stabilizes bases of the 16S rRNA that are involved in tRNA selection in the A site and with the mRNA backbone. Located at the interface of the 30S and 50S subunits, it traverses the body of the 30S subunit contacting proteins on the other side and probably holding the rRNA structure together. The combined cluster of proteins S8, S12 and S17 appears to hold together the shoulder and platform of the 30S subunit. In Hamiltonella defensa subsp. Acyrthosiphon pisum (strain 5AT), this protein is Small ribosomal subunit protein uS12.